Here is a 375-residue protein sequence, read N- to C-terminus: Queuine tRNA-ribosyltransferase (375 aa).

The active-site Proton acceptor is D89. Residues 89–93 (DSGGF), D143, Q187, and G214 each bind substrate. Residues 245–251 (GVGKPED) form an RNA binding region. The active-site Nucleophile is D264. The interval 269–273 (TRNAR) is RNA binding; important for wobble base 34 recognition. C302, C304, C307, and H333 together coordinate Zn(2+).

Belongs to the queuine tRNA-ribosyltransferase family. In terms of assembly, homodimer. Within each dimer, one monomer is responsible for RNA recognition and catalysis, while the other monomer binds to the replacement base PreQ1. Zn(2+) is required as a cofactor.

It catalyses the reaction 7-aminomethyl-7-carbaguanine + guanosine(34) in tRNA = 7-aminomethyl-7-carbaguanosine(34) in tRNA + guanine. The protein operates within tRNA modification; tRNA-queuosine biosynthesis. Functionally, catalyzes the base-exchange of a guanine (G) residue with the queuine precursor 7-aminomethyl-7-deazaguanine (PreQ1) at position 34 (anticodon wobble position) in tRNAs with GU(N) anticodons (tRNA-Asp, -Asn, -His and -Tyr). Catalysis occurs through a double-displacement mechanism. The nucleophile active site attacks the C1' of nucleotide 34 to detach the guanine base from the RNA, forming a covalent enzyme-RNA intermediate. The proton acceptor active site deprotonates the incoming PreQ1, allowing a nucleophilic attack on the C1' of the ribose to form the product. After dissociation, two additional enzymatic reactions on the tRNA convert PreQ1 to queuine (Q), resulting in the hypermodified nucleoside queuosine (7-(((4,5-cis-dihydroxy-2-cyclopenten-1-yl)amino)methyl)-7-deazaguanosine). The sequence is that of Queuine tRNA-ribosyltransferase from Aliivibrio fischeri (strain ATCC 700601 / ES114) (Vibrio fischeri).